The chain runs to 88 residues: Large ribosomal subunit protein bL27 (88 aa).

It belongs to the bacterial ribosomal protein bL27 family.

This is Large ribosomal subunit protein bL27 from Mycolicibacterium vanbaalenii (strain DSM 7251 / JCM 13017 / BCRC 16820 / KCTC 9966 / NRRL B-24157 / PYR-1) (Mycobacterium vanbaalenii).